We begin with the raw amino-acid sequence, 329 residues long: Malate dehydrogenase (329 aa).

12-18 (GAAGQIG) serves as a coordination point for NAD(+). Substrate-binding residues include arginine 95 and arginine 101. Residues asparagine 108, glutamine 115, and 132-134 (VGN) each bind NAD(+). Residues asparagine 134 and arginine 165 each contribute to the substrate site. Histidine 190 (proton acceptor) is an active-site residue.

This sequence belongs to the LDH/MDH superfamily. MDH type 2 family.

It carries out the reaction (S)-malate + NAD(+) = oxaloacetate + NADH + H(+). In terms of biological role, catalyzes the reversible oxidation of malate to oxaloacetate. This is Malate dehydrogenase from Polynucleobacter necessarius subsp. necessarius (strain STIR1).